Here is a 191-residue protein sequence, read N- to C-terminus: Classical arabinogalactan protein 9 (191 aa).

Residues 1 to 20 (MARSFAIAVICIVLIAGVTG) form the signal peptide. Residues 20–172 (GQAPTSPPTA…SPTDVNDQNG (153 aa)) are disordered. A Pyrrolidone carboxylic acid modification is found at Gln21. Residues Pro23, Pro26, Pro27, Pro31, and Pro33 each carry the 4-hydroxyproline modification. Pro residues predominate over residues 24–146 (TSPPTATPAP…PSPSSSPPLP (123 aa)). O-linked (Ara...) hydroxyproline glycans are attached at residues Pro26, Pro27, Pro31, and Pro33. Residues 155–172 (TDSISPAPSPTDVNDQNG) are compositionally biased toward polar residues. Gly172 carries GPI-anchor amidated glycine lipidation. Residues 173–191 (ASKMVSSLVFGSVLVWFMI) constitute a propeptide, removed in mature form.

This sequence belongs to the classical AGP family. O-glycosylated on hydroxyprolines; noncontiguous hydroxylproline residues are glycosylated with arabinogalactan. In terms of tissue distribution, predominantly expressed in flowers and at a lower level in leaves and siliques.

It is found in the cell membrane. Functionally, proteoglycan that seems to be implicated in diverse developmental roles such as differentiation, cell-cell recognition, embryogenesis and programmed cell death. The protein is Classical arabinogalactan protein 9 (AGP9) of Arabidopsis thaliana (Mouse-ear cress).